Here is a 58-residue protein sequence, read N- to C-terminus: Probable U-exon protein (58 aa).

The sequence is that of Probable U-exon protein from Snake adenovirus serotype 1 (SnAdV-1).